Consider the following 875-residue polypeptide: Phosphoenolpyruvate carboxylase (875 aa).

Active-site residues include His-137 and Lys-542.

Belongs to the PEPCase type 1 family. Requires Mg(2+) as cofactor.

It carries out the reaction oxaloacetate + phosphate = phosphoenolpyruvate + hydrogencarbonate. Its function is as follows. Forms oxaloacetate, a four-carbon dicarboxylic acid source for the tricarboxylic acid cycle. The protein is Phosphoenolpyruvate carboxylase of Pseudomonas putida (strain ATCC 700007 / DSM 6899 / JCM 31910 / BCRC 17059 / LMG 24140 / F1).